Here is a 75-residue protein sequence, read N- to C-terminus: Small ribosomal subunit protein bS18 (75 aa).

Belongs to the bacterial ribosomal protein bS18 family. Part of the 30S ribosomal subunit. Forms a tight heterodimer with protein bS6.

Functionally, binds as a heterodimer with protein bS6 to the central domain of the 16S rRNA, where it helps stabilize the platform of the 30S subunit. In Pseudoalteromonas translucida (strain TAC 125), this protein is Small ribosomal subunit protein bS18.